A 937-amino-acid chain; its full sequence is Chromatin assembly factor 1 subunit A (937 aa).

A disordered region spans residues 21 to 69 (RLPFKRLNPVPKEKHDAEAEGKKGKCSKSGLGQSKDSSTDTLHASTDNM). The segment covering 31 to 43 (PKEKHDAEAEGKK) has biased composition (basic and acidic residues). Polar residues predominate over residues 59–69 (TDTLHASTDNM). Positions 213 to 226 (FEGKMPVVLLEDIM) match the PxVxL motif motif. Disordered stretches follow at residues 250 to 386 (SHEG…EKRK), 574 to 614 (VDSD…IPHG), 753 to 778 (GDTS…VPSK), 831 to 851 (SGKE…TPVS), and 910 to 937 (TVTE…SNTV). Residues 255-269 (SVLTNSSLSSLSVSS) are compositionally biased toward low complexity. Positions 301 to 386 (SSAEKEKLRL…KLRVKEEKRK (86 aa)) are enriched in basic and acidic residues. Acidic residues-rich tracts occupy residues 574–586 (VDSD…EEPG) and 594–608 (GDDE…DDDG). Polar residues predominate over residues 756-766 (SPVSPNTSRPQ).

It belongs to the CHAF1A family. As to quaternary structure, subunit of the CAF-1 complex that contains RBBP4, CHAF1B and CHAF1A. Interacts with CHAF1B, PCNA and RBBP4.

The protein resides in the nucleus. Acts as a component of the histone chaperone complex chromatin assembly factor 1 (CAF-1), which assembles histone octamers onto DNA during replication and repair. CAF-1 performs the first step of the nucleosome assembly process, bringing newly synthesized histones H3 and H4 to replicating DNA; histones H2A/H2B can bind to this chromatin precursor subsequent to DNA replication to complete the histone octamer. The protein is Chromatin assembly factor 1 subunit A (CHAF1A) of Gallus gallus (Chicken).